The chain runs to 113 residues: Cell cycle protein GpsB (113 aa).

Residues 36–68 (LDMVIKDYSTFTQEIEALQAENIRLVQELDNAP) are a coiled coil.

This sequence belongs to the GpsB family. Forms polymers through the coiled coil domains. Interacts with PBP1, MreC and EzrA.

It is found in the cytoplasm. Functionally, divisome component that associates with the complex late in its assembly, after the Z-ring is formed, and is dependent on DivIC and PBP2B for its recruitment to the divisome. Together with EzrA, is a key component of the system that regulates PBP1 localization during cell cycle progression. Its main role could be the removal of PBP1 from the cell pole after pole maturation is completed. Also contributes to the recruitment of PBP1 to the division complex. Not essential for septum formation. This chain is Cell cycle protein GpsB, found in Listeria welshimeri serovar 6b (strain ATCC 35897 / DSM 20650 / CCUG 15529 / CIP 8149 / NCTC 11857 / SLCC 5334 / V8).